The following is a 981-amino-acid chain: Probable NAD kinase 2, chloroplastic (981 aa).

The interval 319 to 364 (APSAEQVQRFAEIVSDSAKKPIYLHSQEGISRTSAMVSRWKQYVTR) is calmodulin-binding. 2 disordered regions span residues 369-413 (ATQN…DRTM) and 551-601 (TNGK…AERN). 3 stretches are compositionally biased toward polar residues: residues 387–406 (TEQLTNSPGFSSEGSENGTP), 551–563 (TNGKPSNNGASTS), and 581–596 (SDTSNSNGNAPLGSQK).

The protein belongs to the NAD kinase family.

The protein localises to the plastid. The protein resides in the chloroplast. It catalyses the reaction NAD(+) + ATP = ADP + NADP(+) + H(+). Its function is as follows. Involved in chlorophyll synthesis and chloroplast protection against oxidative damage. The polypeptide is Probable NAD kinase 2, chloroplastic (Oryza sativa subsp. japonica (Rice)).